Consider the following 245-residue polypeptide: 1-(5-phosphoribosyl)-5-[(5-phosphoribosylamino)methylideneamino] imidazole-4-carboxamide isomerase (245 aa).

D7 functions as the Proton acceptor in the catalytic mechanism. Catalysis depends on D129, which acts as the Proton donor.

This sequence belongs to the HisA/HisF family.

It localises to the cytoplasm. The enzyme catalyses 1-(5-phospho-beta-D-ribosyl)-5-[(5-phospho-beta-D-ribosylamino)methylideneamino]imidazole-4-carboxamide = 5-[(5-phospho-1-deoxy-D-ribulos-1-ylimino)methylamino]-1-(5-phospho-beta-D-ribosyl)imidazole-4-carboxamide. The protein operates within amino-acid biosynthesis; L-histidine biosynthesis; L-histidine from 5-phospho-alpha-D-ribose 1-diphosphate: step 4/9. The protein is 1-(5-phosphoribosyl)-5-[(5-phosphoribosylamino)methylideneamino] imidazole-4-carboxamide isomerase of Shewanella sp. (strain MR-7).